Reading from the N-terminus, the 106-residue chain is NADH-quinone oxidoreductase subunit K (106 aa).

Transmembrane regions (helical) follow at residues 10–30 (IHYYLILAMIIFTIGVAGVMV), 35–55 (VLIFMSVELILNSVNLVFVTF), and 67–87 (VVFFVMAIAAAEAAIGLAIVI).

Belongs to the complex I subunit 4L family. NDH-1 is composed of 14 different subunits. Subunits NuoA, H, J, K, L, M, N constitute the membrane sector of the complex.

It localises to the cell inner membrane. It carries out the reaction a quinone + NADH + 5 H(+)(in) = a quinol + NAD(+) + 4 H(+)(out). Functionally, NDH-1 shuttles electrons from NADH, via FMN and iron-sulfur (Fe-S) centers, to quinones in the respiratory chain. The immediate electron acceptor for the enzyme in this species is believed to be ubiquinone. Couples the redox reaction to proton translocation (for every two electrons transferred, four hydrogen ions are translocated across the cytoplasmic membrane), and thus conserves the redox energy in a proton gradient. The sequence is that of NADH-quinone oxidoreductase subunit K from Leptospira borgpetersenii serovar Hardjo-bovis (strain JB197).